The primary structure comprises 592 residues: Insulin-like growth factor 2 mRNA-binding protein 2 (592 aa).

RRM domains follow at residues 3–76 (NKLY…YSVS) and 82–157 (RRIQ…YIPD). Ser11 carries the post-translational modification Phosphoserine. The interval 157–182 (DEEVSSPSPPHRAREQGHGPGSSSQA) is disordered. 2 positions are modified to phosphoserine: Ser162 and Ser164. 4 KH domains span residues 186–251 (DFPL…CRMI), 267–334 (EVPL…EIEI), 420–485 (QETV…QGRI), and 502–568 (KLEA…QRKI). Thr543 carries the post-translational modification Phosphothreonine.

Belongs to the RRM IMP/VICKZ family. In terms of assembly, can form homooligomers and heterooligomers with IGF2BP1 and IGF2BP3 in an RNA-dependent manner. Interacts with HNRPD. Interacts with IGF2BP1. Interacts with ELAVL1, DHX9, HNRNPU, MATR3 and PABPC1. As to expression, expressed in oocytes, granulosa cells of small and growing follicles and Leydig cells of the testis (at protein level). Expressed in testis and ovary.

Its subcellular location is the nucleus. The protein resides in the cytoplasm. It localises to the P-body. The protein localises to the stress granule. In terms of biological role, RNA-binding factor that recruits target transcripts to cytoplasmic protein-RNA complexes (mRNPs). This transcript 'caging' into mRNPs allows mRNA transport and transient storage. It also modulates the rate and location at which target transcripts encounter the translational apparatus and shields them from endonuclease attacks or microRNA-mediated degradation. Preferentially binds to N6-methyladenosine (m6A)-containing mRNAs and increases their stability. Binds to the 5'-UTR of the insulin-like growth factor 2 (IGF2) mRNAs. Binding is isoform-specific. Binds to beta-actin/ACTB and MYC transcripts. Increases MYC mRNA stability by binding to the coding region instability determinant (CRD) and binding is enhanced by m6A-modification of the CRD. This Mus musculus (Mouse) protein is Insulin-like growth factor 2 mRNA-binding protein 2 (Igf2bp2).